We begin with the raw amino-acid sequence, 461 residues long: Cytochrome c biogenesis protein CcsB (461 aa).

A run of 3 helical transmembrane segments spans residues 32 to 52, 91 to 111, and 178 to 198; these read LRLAIALLLIIALFSISGTVI, TWWFLSLLVLFGTSLTACTFT, and IGPIIVHIGIVTILLGSIWGA.

The protein belongs to the Ccs1/CcsB family. As to quaternary structure, may interact with CcsA.

Its subcellular location is the cellular thylakoid membrane. In terms of biological role, required during biogenesis of c-type cytochromes (cytochrome c6 and cytochrome f) at the step of heme attachment. This is Cytochrome c biogenesis protein CcsB from Trichormus variabilis (strain ATCC 29413 / PCC 7937) (Anabaena variabilis).